The primary structure comprises 283 residues: 2-dehydro-3-deoxyphosphooctonate aldolase (283 aa).

It belongs to the KdsA family.

It is found in the cytoplasm. It carries out the reaction D-arabinose 5-phosphate + phosphoenolpyruvate + H2O = 3-deoxy-alpha-D-manno-2-octulosonate-8-phosphate + phosphate. Its pathway is carbohydrate biosynthesis; 3-deoxy-D-manno-octulosonate biosynthesis; 3-deoxy-D-manno-octulosonate from D-ribulose 5-phosphate: step 2/3. It functions in the pathway bacterial outer membrane biogenesis; lipopolysaccharide biosynthesis. The sequence is that of 2-dehydro-3-deoxyphosphooctonate aldolase from Vibrio campbellii (strain ATCC BAA-1116).